A 119-amino-acid chain; its full sequence is NADH dehydrogenase [ubiquinone] 1 subunit C2 (119 aa).

The chain crosses the membrane as a helical span at residues 56-75 (GLHRQLLYITAFFFAGYYLV).

Belongs to the complex I NDUFC2 subunit family. In terms of assembly, complex I is composed of 45 different subunits. Interacts with TMEM242.

It localises to the mitochondrion inner membrane. Accessory subunit of the mitochondrial membrane respiratory chain NADH dehydrogenase (Complex I), that is believed not to be involved in catalysis but required for the complex assembly. Complex I functions in the transfer of electrons from NADH to the respiratory chain. The immediate electron acceptor for the enzyme is believed to be ubiquinone. The protein is NADH dehydrogenase [ubiquinone] 1 subunit C2 of Pongo pygmaeus (Bornean orangutan).